A 423-amino-acid polypeptide reads, in one-letter code: MTESVLDYMTRLGRAAREASRVIGRASTAQKNRALQAAAAALDAARDALTAANEQDLANGRKNGLEPALLDRLALTPARIDGMITGLRQVASLPDPVGAIRDMSYRPSGIQVGKMRVPLGVIGIIYESRPNVTIDAASLCLKSGNATILRGGSEAIHSNRAIATCIQRGLAEAGLPPAVVQVVETTDREAVGALISMPEYVDVIVPRGGRGLIERISRDARVPVIKHLDGICHIFVDEHADLDKAWRVAFNAKTYRYGICGAMETLLVDQRVAERFLPEMARRFQEKGVELRGCERTRAIIDSKPASEDDWHTEYLDAILSIRIVDGLEQAIEHINHYGSHHTDSIITEHQGQARRFMAEVDSASVMLNTPTCFADGFEYGLGAEIGISTDKLHARGPVGLEGLTCEKYVVIGDGQLRGQEPC.

This sequence belongs to the gamma-glutamyl phosphate reductase family.

Its subcellular location is the cytoplasm. It carries out the reaction L-glutamate 5-semialdehyde + phosphate + NADP(+) = L-glutamyl 5-phosphate + NADPH + H(+). Its pathway is amino-acid biosynthesis; L-proline biosynthesis; L-glutamate 5-semialdehyde from L-glutamate: step 2/2. In terms of biological role, catalyzes the NADPH-dependent reduction of L-glutamate 5-phosphate into L-glutamate 5-semialdehyde and phosphate. The product spontaneously undergoes cyclization to form 1-pyrroline-5-carboxylate. The sequence is that of Gamma-glutamyl phosphate reductase from Pseudomonas entomophila (strain L48).